The primary structure comprises 180 residues: ATP synthase subunit delta (180 aa).

This sequence belongs to the ATPase delta chain family. F-type ATPases have 2 components, F(1) - the catalytic core - and F(0) - the membrane proton channel. F(1) has five subunits: alpha(3), beta(3), gamma(1), delta(1), epsilon(1). F(0) has three main subunits: a(1), b(2) and c(10-14). The alpha and beta chains form an alternating ring which encloses part of the gamma chain. F(1) is attached to F(0) by a central stalk formed by the gamma and epsilon chains, while a peripheral stalk is formed by the delta and b chains.

The protein resides in the cell membrane. In terms of biological role, f(1)F(0) ATP synthase produces ATP from ADP in the presence of a proton or sodium gradient. F-type ATPases consist of two structural domains, F(1) containing the extramembraneous catalytic core and F(0) containing the membrane proton channel, linked together by a central stalk and a peripheral stalk. During catalysis, ATP synthesis in the catalytic domain of F(1) is coupled via a rotary mechanism of the central stalk subunits to proton translocation. Its function is as follows. This protein is part of the stalk that links CF(0) to CF(1). It either transmits conformational changes from CF(0) to CF(1) or is implicated in proton conduction. The polypeptide is ATP synthase subunit delta (Lactobacillus delbrueckii subsp. bulgaricus (strain ATCC BAA-365 / Lb-18)).